The chain runs to 434 residues: Innexin-14 (434 aa).

A run of 4 helical transmembrane segments spans residues 30–50 (LFTV…QHFG), 106–126 (WVPF…WCWA), 301–321 (IFIG…IGTV), and 365–385 (YLCA…GFLK).

The protein belongs to the pannexin family.

The protein localises to the cell membrane. It is found in the cell junction. It localises to the gap junction. In terms of biological role, structural component of the gap junctions. In Caenorhabditis elegans, this protein is Innexin-14 (inx-14).